Reading from the N-terminus, the 125-residue chain is MFYNVFHSFFCEIFEKKLSQLQMLADPERHDISKLHTVAKRIGHNLNGSKRDKEKVRQAVEMVGAAKIFNSGNLPICWKFQFRQFADLPENSIPAICRFAGKNRLPPTSNFHNILENVSSNIAKN.

This is an uncharacterized protein from Caenorhabditis elegans.